The sequence spans 1104 residues: Ankyrin repeat- and BTB/POZ domain-containing protein 3 (1104 aa).

Residues 168 to 188 (IVLSWGLAAHCTAAALAALSL) traverse the membrane as a helical segment. The interval 260–301 (SCSGPGSGSGSGPGPSSGPGAAPAADKEREAPGGGAASGGAC) is disordered. The span at 264–276 (PGSGSGSGPGPSS) shows a compositional bias: gly residues. ANK repeat units lie at residues 603–632 (QGMTPLMYACVRGDEAMVQMLLDAGADLNV), 649–678 (RHWTALTFAVLHGHIPVVQLLLDAGAKVEG), 687–716 (YSETPLQLAAAVGNFELVSLLLERGADPLI), 730–759 (GDMNSFSQAAAHGHRNVFRKLLAQPEKEKS), and 825–854 (TWLESLRIAFQQHRRPLIQCLLKEFKTIQE). Residues 923-989 (SDVTFLVEGR…LYYGGPESLL (67 aa)) form the BTB domain.

The protein localises to the membrane. This is Ankyrin repeat- and BTB/POZ domain-containing protein 3 from Homo sapiens (Human).